A 413-amino-acid chain; its full sequence is Multifunctional CCA protein (413 aa).

ATP-binding residues include Gly-8 and Arg-11. The CTP site is built by Gly-8 and Arg-11. Residues Asp-21 and Asp-23 each coordinate Mg(2+). Residues Arg-91, Arg-137, and Arg-140 each contribute to the ATP site. CTP-binding residues include Arg-91, Arg-137, and Arg-140. Residues 225–326 (TGVHVMMVID…ANLLQGVDAY (102 aa)) form the HD domain.

It belongs to the tRNA nucleotidyltransferase/poly(A) polymerase family. Bacterial CCA-adding enzyme type 1 subfamily. Monomer. Can also form homodimers and oligomers. The cofactor is Mg(2+). It depends on Ni(2+) as a cofactor.

The enzyme catalyses a tRNA precursor + 2 CTP + ATP = a tRNA with a 3' CCA end + 3 diphosphate. It catalyses the reaction a tRNA with a 3' CCA end + 2 CTP + ATP = a tRNA with a 3' CCACCA end + 3 diphosphate. In terms of biological role, catalyzes the addition and repair of the essential 3'-terminal CCA sequence in tRNAs without using a nucleic acid template. Adds these three nucleotides in the order of C, C, and A to the tRNA nucleotide-73, using CTP and ATP as substrates and producing inorganic pyrophosphate. tRNA 3'-terminal CCA addition is required both for tRNA processing and repair. Also involved in tRNA surveillance by mediating tandem CCA addition to generate a CCACCA at the 3' terminus of unstable tRNAs. While stable tRNAs receive only 3'-terminal CCA, unstable tRNAs are marked with CCACCA and rapidly degraded. The polypeptide is Multifunctional CCA protein (Nitrosospira multiformis (strain ATCC 25196 / NCIMB 11849 / C 71)).